Consider the following 835-residue polypeptide: Cap-specific mRNA (nucleoside-2'-O-)-methyltransferase 1 (835 aa).

The disordered stretch occupies residues 1-66 (MKRRNDSECT…TEGKQRSSDS (66 aa)). The Bipartite nuclear localization signal signature appears at 2 to 19 (KRRNDSECTAPLKKQKKR). 5 positions are modified to phosphoserine: serine 28, serine 31, serine 53, serine 66, and serine 91. The span at 57–66 (TEGKQRSSDS) shows a compositional bias: basic and acidic residues. The G-patch domain occupies 87 to 133 (YNSVSQKLMAKMGFKEGEGLGKYSQGRKDIVEASNQKGRRGLGLTLQ). Lysine 108 is subject to N6-acetyllysine. Substrate is bound by residues 203–207 (KSVFD) and arginine 218. Residues 231 to 450 (FFLNRAAMKM…ERYVVCKGLK (220 aa)) form the RrmJ-type SAM-dependent 2'-O-MTase domain. Residue asparagine 234 coordinates S-adenosyl-L-methionine. The active site involves lysine 239. S-adenosyl-L-methionine contacts are provided by residues 277-283 (CAGPGGF) and 335-336 (DI). Residue aspartate 364 is part of the active site. 374–376 (NLQ) serves as a coordination point for substrate. Lysine 404 serves as the catalytic Proton acceptor. Asparagine 439 serves as a coordination point for substrate. Positions 727-835 (SSGTPKLSYT…VLSFIQTHSA (109 aa)) are interaction with POLR2A. A WW domain is found at 752 to 786 (RTVNEPWTMGFSKSFKRKFFYNKKTKNSTFDLPAD).

Interacts with POLR2A (via C-terminus).

It is found in the nucleus. It carries out the reaction a 5'-end (N(7)-methyl 5'-triphosphoguanosine)-ribonucleoside in mRNA + S-adenosyl-L-methionine = a 5'-end (N(7)-methyl 5'-triphosphoguanosine)-(2'-O-methyl-ribonucleoside) in mRNA + S-adenosyl-L-homocysteine + H(+). Its function is as follows. S-adenosyl-L-methionine-dependent methyltransferase that mediates mRNA cap1 2'-O-ribose methylation to the 5'-cap structure of mRNAs. Methylates the ribose of the first nucleotide of a m(7)GpppG-capped mRNA and small nuclear RNA (snRNA) to produce m(7)GpppRm (cap1). Displays a preference for cap0 transcripts. Cap1 modification is linked to higher levels of translation. May be involved in the interferon response pathway. The polypeptide is Cap-specific mRNA (nucleoside-2'-O-)-methyltransferase 1 (CMTR1) (Bos taurus (Bovine)).